The primary structure comprises 431 residues: 23S rRNA (uracil(1939)-C(5))-methyltransferase RlmD (431 aa).

Residues 10-68 form the TRAM domain; the sequence is RVTTRQIITVKVNDLDSFGQGVARHNGKALFIPGLLPEESAEVIITEDKKQFARARVSR. [4Fe-4S] cluster-binding residues include Cys81, Cys87, Cys90, and Cys161. S-adenosyl-L-methionine-binding residues include Gln264, Phe293, Asn298, Glu314, Asn341, and Asp362. The active-site Nucleophile is the Cys388.

It belongs to the class I-like SAM-binding methyltransferase superfamily. RNA M5U methyltransferase family. RlmD subfamily.

The catalysed reaction is uridine(1939) in 23S rRNA + S-adenosyl-L-methionine = 5-methyluridine(1939) in 23S rRNA + S-adenosyl-L-homocysteine + H(+). In terms of biological role, catalyzes the formation of 5-methyl-uridine at position 1939 (m5U1939) in 23S rRNA. This Salmonella typhi protein is 23S rRNA (uracil(1939)-C(5))-methyltransferase RlmD.